The following is a 491-amino-acid chain: Malonate-semialdehyde dehydrogenase 1 (491 aa).

NAD(+) contacts are provided by Ala154, Phe156, Lys180, Glu183, Arg184, Ser233, and Thr255. The active-site Nucleophile is the Cys288. Residue Glu386 participates in NAD(+) binding.

The protein belongs to the aldehyde dehydrogenase family. IolA subfamily. Homotetramer.

It catalyses the reaction 3-oxopropanoate + NAD(+) + CoA + H2O = hydrogencarbonate + acetyl-CoA + NADH + H(+). The catalysed reaction is 2-methyl-3-oxopropanoate + NAD(+) + CoA + H2O = propanoyl-CoA + hydrogencarbonate + NADH + H(+). It functions in the pathway polyol metabolism; myo-inositol degradation into acetyl-CoA; acetyl-CoA from myo-inositol: step 7/7. Functionally, catalyzes the oxidation of malonate semialdehyde (MSA) and methylmalonate semialdehyde (MMSA) into acetyl-CoA and propanoyl-CoA, respectively. Is involved in a myo-inositol catabolic pathway. Bicarbonate, and not CO2, is the end-product of the enzymatic reaction. The chain is Malonate-semialdehyde dehydrogenase 1 from Shouchella clausii (strain KSM-K16) (Alkalihalobacillus clausii).